Consider the following 250-residue polypeptide: Serine/arginine-rich splicing factor RS31A (250 aa).

RRM domains follow at residues 2–74 (RHVY…WAKD) and 95–166 (KTLF…YALR). The disordered stretch occupies residues 170 to 250 (EREDRYAGSR…SRSPIQRARG (81 aa)). Residues 177 to 191 (GSRRRRSPSPVYRRR) show a composition bias toward basic residues. A phosphoserine mark is found at S183, S185, S201, S218, and S243. Residues 192 to 230 (PSPDYTRRRSPEYDRYKGPAPYERRKSPDYGRRSSDYGR) are compositionally biased toward basic and acidic residues.

The protein belongs to the splicing factor SR family. RS subfamily. Component of the spliceosome. Interacts with MOS14.

The protein resides in the nucleus speckle. It is found in the nucleus. The protein localises to the nucleoplasm. Functionally, probably involved in intron recognition and spliceosome assembly. This Arabidopsis thaliana (Mouse-ear cress) protein is Serine/arginine-rich splicing factor RS31A (RS31A).